The sequence spans 432 residues: Glutamate-1-semialdehyde 2,1-aminomutase (432 aa).

Lysine 271 is subject to N6-(pyridoxal phosphate)lysine.

Belongs to the class-III pyridoxal-phosphate-dependent aminotransferase family. HemL subfamily. Homodimer. It depends on pyridoxal 5'-phosphate as a cofactor.

Its subcellular location is the cytoplasm. The enzyme catalyses (S)-4-amino-5-oxopentanoate = 5-aminolevulinate. The protein operates within porphyrin-containing compound metabolism; protoporphyrin-IX biosynthesis; 5-aminolevulinate from L-glutamyl-tRNA(Glu): step 2/2. It participates in porphyrin-containing compound metabolism; chlorophyll biosynthesis. This is Glutamate-1-semialdehyde 2,1-aminomutase from Prochlorococcus marinus (strain MIT 9211).